The primary structure comprises 631 residues: tRNA uridine 5-carboxymethylaminomethyl modification enzyme MnmG (631 aa).

Position 15-20 (15-20 (GAGHAG)) interacts with FAD. Residues 203-232 (TPPRVDGNTVDYSKTQEEPGDKEPRHFSYT) form a disordered region. The segment covering 216–232 (KTQEEPGDKEPRHFSYT) has biased composition (basic and acidic residues). 276-290 (GPRYCPSIEDKVVRF) lines the NAD(+) pocket.

This sequence belongs to the MnmG family. Homodimer. Heterotetramer of two MnmE and two MnmG subunits. FAD serves as cofactor.

Its subcellular location is the cytoplasm. In terms of biological role, NAD-binding protein involved in the addition of a carboxymethylaminomethyl (cmnm) group at the wobble position (U34) of certain tRNAs, forming tRNA-cmnm(5)s(2)U34. This chain is tRNA uridine 5-carboxymethylaminomethyl modification enzyme MnmG, found in Lactobacillus gasseri (strain ATCC 33323 / DSM 20243 / BCRC 14619 / CIP 102991 / JCM 1131 / KCTC 3163 / NCIMB 11718 / NCTC 13722 / AM63).